Reading from the N-terminus, the 152-residue chain is Flagellar assembly factor FliW (152 aa).

Belongs to the FliW family. In terms of assembly, interacts with translational regulator CsrA and flagellin(s).

It localises to the cytoplasm. Functionally, acts as an anti-CsrA protein, binds CsrA and prevents it from repressing translation of its target genes, one of which is flagellin. Binds to flagellin and participates in the assembly of the flagellum. This chain is Flagellar assembly factor FliW, found in Caldicellulosiruptor saccharolyticus (strain ATCC 43494 / DSM 8903 / Tp8T 6331).